The primary structure comprises 434 residues: Ribosomal protein uS12 methylthiotransferase RimO (434 aa).

The region spanning 1–107 (MHLGCEKNLV…ILNVLQRIEQ (107 aa)) is the MTTase N-terminal domain. Residues Cys-5, Cys-41, Cys-70, Cys-145, Cys-149, and Cys-152 each contribute to the [4Fe-4S] cluster site. In terms of domain architecture, Radical SAM core spans 131–360 (TTGKAVAYLK…ISIQQPIAEL (230 aa)). Positions 363-434 (QNWIGRTVDV…DLYDLTGQVV (72 aa)) constitute a TRAM domain.

It belongs to the methylthiotransferase family. RimO subfamily. Requires [4Fe-4S] cluster as cofactor.

The protein localises to the cytoplasm. The catalysed reaction is L-aspartate(89)-[ribosomal protein uS12]-hydrogen + (sulfur carrier)-SH + AH2 + 2 S-adenosyl-L-methionine = 3-methylsulfanyl-L-aspartate(89)-[ribosomal protein uS12]-hydrogen + (sulfur carrier)-H + 5'-deoxyadenosine + L-methionine + A + S-adenosyl-L-homocysteine + 2 H(+). Functionally, catalyzes the methylthiolation of an aspartic acid residue of ribosomal protein uS12. The protein is Ribosomal protein uS12 methylthiotransferase RimO of Prochlorococcus marinus (strain SARG / CCMP1375 / SS120).